A 506-amino-acid polypeptide reads, in one-letter code: Phase 2 flagellin (506 aa).

It belongs to the bacterial flagellin family.

The protein localises to the secreted. It is found in the bacterial flagellum. In terms of biological role, flagellin is the subunit protein which polymerizes to form the filaments of bacterial flagella. In Salmonella typhimurium (strain LT2 / SGSC1412 / ATCC 700720), this protein is Phase 2 flagellin (fljB).